The following is a 513-amino-acid chain: ATP synthase subunit alpha (513 aa).

169 to 176 (GDRQTGKT) lines the ATP pocket.

The protein belongs to the ATPase alpha/beta chains family. In terms of assembly, F-type ATPases have 2 components, CF(1) - the catalytic core - and CF(0) - the membrane proton channel. CF(1) has five subunits: alpha(3), beta(3), gamma(1), delta(1), epsilon(1). CF(0) has three main subunits: a(1), b(2) and c(9-12). The alpha and beta chains form an alternating ring which encloses part of the gamma chain. CF(1) is attached to CF(0) by a central stalk formed by the gamma and epsilon chains, while a peripheral stalk is formed by the delta and b chains.

It is found in the cell inner membrane. It catalyses the reaction ATP + H2O + 4 H(+)(in) = ADP + phosphate + 5 H(+)(out). In terms of biological role, produces ATP from ADP in the presence of a proton gradient across the membrane. The alpha chain is a regulatory subunit. The chain is ATP synthase subunit alpha from Vibrio cholerae serotype O1 (strain ATCC 39541 / Classical Ogawa 395 / O395).